The primary structure comprises 312 residues: Ribonuclease HIII (312 aa).

Residues 95-311 (FNCIGSDEAG…REKAQKILKP (217 aa)) enclose the RNase H type-2 domain. Residues Asp-101, Glu-102, and Asp-206 each contribute to the a divalent metal cation site.

The protein belongs to the RNase HII family. RnhC subfamily. The cofactor is Mn(2+). Requires Mg(2+) as cofactor.

The protein localises to the cytoplasm. The catalysed reaction is Endonucleolytic cleavage to 5'-phosphomonoester.. Its function is as follows. Endonuclease that specifically degrades the RNA of RNA-DNA hybrids. In Staphylococcus aureus (strain USA300), this protein is Ribonuclease HIII.